The following is a 144-amino-acid chain: MTEQKQVKKPSARRRARECTVQALYSWAVSGNTAEQVELAFVLDQDMDGVDKPYFRKLFRQTVENIETVDFSISPYIDRAFDELDPIETAILRLAVYELCFELDVPYKVVINEAIEVAKVFGADESHKYINGVLDKIAPALGRK.

The protein belongs to the NusB family.

Its function is as follows. Involved in transcription antitermination. Required for transcription of ribosomal RNA (rRNA) genes. Binds specifically to the boxA antiterminator sequence of the ribosomal RNA (rrn) operons. In Haemophilus influenzae (strain 86-028NP), this protein is Transcription antitermination protein NusB.